The primary structure comprises 658 residues: DNA mismatch repair protein MutL (658 aa).

The span at 114-130 (RQEDSSHATQVKAEDGK) shows a compositional bias: basic and acidic residues. The interval 114-137 (RQEDSSHATQVKAEDGKLSSPTAA) is disordered.

This sequence belongs to the DNA mismatch repair MutL/HexB family.

Functionally, this protein is involved in the repair of mismatches in DNA. It is required for dam-dependent methyl-directed DNA mismatch repair. May act as a 'molecular matchmaker', a protein that promotes the formation of a stable complex between two or more DNA-binding proteins in an ATP-dependent manner without itself being part of a final effector complex. The chain is DNA mismatch repair protein MutL from Neisseria meningitidis serogroup C / serotype 2a (strain ATCC 700532 / DSM 15464 / FAM18).